Here is a 210-residue protein sequence, read N- to C-terminus: Probable nicotinate-nucleotide adenylyltransferase (210 aa).

It belongs to the NadD family.

The enzyme catalyses nicotinate beta-D-ribonucleotide + ATP + H(+) = deamido-NAD(+) + diphosphate. It participates in cofactor biosynthesis; NAD(+) biosynthesis; deamido-NAD(+) from nicotinate D-ribonucleotide: step 1/1. Catalyzes the reversible adenylation of nicotinate mononucleotide (NaMN) to nicotinic acid adenine dinucleotide (NaAD). In Streptococcus mutans serotype c (strain ATCC 700610 / UA159), this protein is Probable nicotinate-nucleotide adenylyltransferase.